We begin with the raw amino-acid sequence, 514 residues long: ATP synthase subunit alpha (514 aa).

169–176 (GDRQTGKT) serves as a coordination point for ATP.

This sequence belongs to the ATPase alpha/beta chains family. In terms of assembly, F-type ATPases have 2 components, CF(1) - the catalytic core - and CF(0) - the membrane proton channel. CF(1) has five subunits: alpha(3), beta(3), gamma(1), delta(1), epsilon(1). CF(0) has three main subunits: a(1), b(2) and c(9-12). The alpha and beta chains form an alternating ring which encloses part of the gamma chain. CF(1) is attached to CF(0) by a central stalk formed by the gamma and epsilon chains, while a peripheral stalk is formed by the delta and b chains.

Its subcellular location is the cell membrane. It catalyses the reaction ATP + H2O + 4 H(+)(in) = ADP + phosphate + 5 H(+)(out). Functionally, produces ATP from ADP in the presence of a proton gradient across the membrane. The alpha chain is a regulatory subunit. This is ATP synthase subunit alpha from Buchnera aphidicola subsp. Baizongia pistaciae (strain Bp).